Consider the following 279-residue polypeptide: MDTELLKTFLEVSRTRHFGRAAESLYLTQSAVSFRIRQLENQLGVNLFTRHRNNIRLTAAGEKLLPYAETLMSTWQAARKEVAHTSRHNEFSIGASASLWECMLNQWLGRLYQNQDAHTGLQFEARIAQRQSLVKQLHERQLDLLITTEAPKMDEFSSQLLGYFTLALYTSAPSKLKGDLNYLRLEWGPDFQQHEAGLIGADEVPILTTSSAELAQQQIAMLNGCTWLPVSWARKKGGLHTVVDSTTLSRPLYAIWLQNSDKNALIRDLLKINVLDEVY.

One can recognise an HTH lysR-type domain in the interval 1-58 (MDTELLKTFLEVSRTRHFGRAAESLYLTQSAVSFRIRQLENQLGVNLFTRHRNNIRLT). Residues 18–37 (FGRAAESLYLTQSAVSFRIR) constitute a DNA-binding region (H-T-H motif).

Belongs to the LysR transcriptional regulatory family.

In terms of biological role, negatively regulates the transcription of the flagellar master operon flhDC by binding to the upstream region of the operon. The polypeptide is HTH-type transcriptional regulator HdfR (Escherichia coli (strain ATCC 8739 / DSM 1576 / NBRC 3972 / NCIMB 8545 / WDCM 00012 / Crooks)).